Reading from the N-terminus, the 502-residue chain is Glycerol kinase (502 aa).

Thr14 contributes to the ADP binding site. The ATP site is built by Thr14, Thr15, and Ser16. Position 14 (Thr14) interacts with sn-glycerol 3-phosphate. Arg18 lines the ADP pocket. Positions 84, 85, 136, and 246 each coordinate sn-glycerol 3-phosphate. Positions 84, 85, 136, 246, and 247 each coordinate glycerol. ADP contacts are provided by Thr268 and Gly311. The ATP site is built by Thr268, Gly311, Gln315, and Gly412. Residues Gly412 and Asn416 each coordinate ADP.

This sequence belongs to the FGGY kinase family. Homotetramer and homodimer (in equilibrium). Heterodimer with EIIA-Glc. Binds 1 zinc ion per glycerol kinase EIIA-Glc dimer. The zinc ion is important for dimerization.

It catalyses the reaction glycerol + ATP = sn-glycerol 3-phosphate + ADP + H(+). It participates in polyol metabolism; glycerol degradation via glycerol kinase pathway; sn-glycerol 3-phosphate from glycerol: step 1/1. Its activity is regulated as follows. Activity of this regulatory enzyme is affected by several metabolites. Allosterically and non-competitively inhibited by fructose 1,6-bisphosphate (FBP) and unphosphorylated phosphocarrier protein EIIA-Glc (III-Glc), an integral component of the bacterial phosphotransferase (PTS) system. Its function is as follows. Key enzyme in the regulation of glycerol uptake and metabolism. Catalyzes the phosphorylation of glycerol to yield sn-glycerol 3-phosphate. The sequence is that of Glycerol kinase from Salmonella heidelberg (strain SL476).